Here is a 360-residue protein sequence, read N- to C-terminus: MEPATALLIVDYYDYTSPDPPFLETPSHLSYTSVFLPIFYTVVFLTGVVGNFILMIALHFKRGNRRLIDIFIINLAASDFIFLVTVPLWMDKEASLGLWRTGSFLCKGSSYVISVNMHCSVFLLTCMSMDRYLAIMHPALAKRLRRRSSAYAVCAVVWIISCVLGLPTLLSRELTHIEGKPYCAEKKPTSLKLMWGLVALITTFFVPLLSIVTCYCCITRRLCAHYQQSGKHNKKLKKSIKIVIIAVAAFTVSWVPFNTFKLLAIVSGFQPEGLFHSEALQLAMNVTGPLAFASSCVNPLIYYVFDSYIRRAIVRCLCPCLKTHNFGSSTETSDSHLTKALSNFIHAEDFIRRRKRSVSL.

Over 1-33 the chain is Extracellular; it reads MEPATALLIVDYYDYTSPDPPFLETPSHLSYTS. Residues 34-54 traverse the membrane as a helical segment; that stretch reads VFLPIFYTVVFLTGVVGNFIL. At 55–69 the chain is on the cytoplasmic side; that stretch reads MIALHFKRGNRRLID. A helical transmembrane segment spans residues 70-90; sequence IFIINLAASDFIFLVTVPLWM. Over 91-120 the chain is Extracellular; the sequence is DKEASLGLWRTGSFLCKGSSYVISVNMHCS. A helical transmembrane segment spans residues 121–141; sequence VFLLTCMSMDRYLAIMHPALA. The Cytoplasmic segment spans residues 142–149; it reads KRLRRRSS. A helical transmembrane segment spans residues 150–170; the sequence is AYAVCAVVWIISCVLGLPTLL. The Extracellular segment spans residues 171 to 192; that stretch reads SRELTHIEGKPYCAEKKPTSLK. Residues 193–213 form a helical membrane-spanning segment; it reads LMWGLVALITTFFVPLLSIVT. Topologically, residues 214–239 are cytoplasmic; it reads CYCCITRRLCAHYQQSGKHNKKLKKS. A helical transmembrane segment spans residues 240 to 260; it reads IKIVIIAVAAFTVSWVPFNTF. The Extracellular segment spans residues 261–284; it reads KLLAIVSGFQPEGLFHSEALQLAM. Residues 285–305 form a helical membrane-spanning segment; the sequence is NVTGPLAFASSCVNPLIYYVF. Residues 306 to 360 lie on the Cytoplasmic side of the membrane; it reads DSYIRRAIVRCLCPCLKTHNFGSSTETSDSHLTKALSNFIHAEDFIRRRKRSVSL. Ser-359 carries the post-translational modification Phosphoserine.

This sequence belongs to the G-protein coupled receptor 1 family. As to quaternary structure, interacts with adapter YWHAE; this interaction promotes ER-to-Golgi transport of GPR15. Post-translationally, phosphorylation is necessary for YWHAE binding and efficient surface expression. In terms of processing, O-glycosylated. Sialylated O-glycans in the N-terminal tail inhibits binding of GPR15LG. Sulfation is required for efficient binding of GPR15LG. As to expression, highly expressed in gut tissues and lymphoid organs, largely restricted to TCRbeta+ cells. Expressed in fetal thymic dendritic epidermal T-cell precursors.

The protein resides in the cell membrane. Functionally, g protein-coupled receptor that plays an important role in immune homeostasis. Acts via its natural ligand GPR15LG, a chemokine-like polypeptide strongly expressed in gastrointestinal tissues. GPR15-GPR15LG signaling axis regulates intestinal homeostasis and inflammation through the migration of immune cells. Controls thereby the specific homing of T-cells, particularly FOXP3+ regulatory T-cells (Tregs), to the large intestine lamina propria. Also required for skin localization of thymus-derived dendritic epidermal T-cells. Plays an important role in mediating cytoprotective function as well as angiogenesis of thrombomodulin. Mechanistically, preferentially signals through the Gi/o pathway to inhibit adenylate cyclase activity and activate a phosphatidylinositol-calcium second messenger system that regulates the release of Ca(2+) ions from intracellular stores. In Mus musculus (Mouse), this protein is G-protein coupled receptor 15 (Gpr15).